The chain runs to 309 residues: Homoserine kinase (309 aa).

91 to 101 (PIGSGLGSSAC) contacts ATP.

This sequence belongs to the GHMP kinase family. Homoserine kinase subfamily.

The protein localises to the cytoplasm. It catalyses the reaction L-homoserine + ATP = O-phospho-L-homoserine + ADP + H(+). Its pathway is amino-acid biosynthesis; L-threonine biosynthesis; L-threonine from L-aspartate: step 4/5. Functionally, catalyzes the ATP-dependent phosphorylation of L-homoserine to L-homoserine phosphate. In Salmonella arizonae (strain ATCC BAA-731 / CDC346-86 / RSK2980), this protein is Homoserine kinase.